The primary structure comprises 98 residues: NADH-ubiquinone oxidoreductase chain 4L (98 aa).

Helical transmembrane passes span Met1–Ile21, Ser28–Ile48, and Ala59–Val79.

The protein belongs to the complex I subunit 4L family. As to quaternary structure, core subunit of respiratory chain NADH dehydrogenase (Complex I) which is composed of 45 different subunits.

It localises to the mitochondrion inner membrane. The enzyme catalyses a ubiquinone + NADH + 5 H(+)(in) = a ubiquinol + NAD(+) + 4 H(+)(out). Functionally, core subunit of the mitochondrial membrane respiratory chain NADH dehydrogenase (Complex I) which catalyzes electron transfer from NADH through the respiratory chain, using ubiquinone as an electron acceptor. Part of the enzyme membrane arm which is embedded in the lipid bilayer and involved in proton translocation. This is NADH-ubiquinone oxidoreductase chain 4L (MT-ND4L) from Lagostrophus fasciatus (Banded hare-wallaby).